The sequence spans 285 residues: Glycine--tRNA ligase alpha subunit (285 aa).

This sequence belongs to the class-II aminoacyl-tRNA synthetase family. In terms of assembly, tetramer of two alpha and two beta subunits.

The protein resides in the cytoplasm. The enzyme catalyses tRNA(Gly) + glycine + ATP = glycyl-tRNA(Gly) + AMP + diphosphate. The sequence is that of Glycine--tRNA ligase alpha subunit from Granulibacter bethesdensis (strain ATCC BAA-1260 / CGDNIH1).